We begin with the raw amino-acid sequence, 513 residues long: Light-independent protochlorophyllide reductase subunit B (513 aa).

Asp-36 is a binding site for [4Fe-4S] cluster. Catalysis depends on Asp-299, which acts as the Proton donor. 434-435 (GM) is a substrate binding site.

The protein belongs to the ChlB/BchB/BchZ family. As to quaternary structure, protochlorophyllide reductase is composed of three subunits; ChlL, ChlN and ChlB. Forms a heterotetramer of two ChlB and two ChlN subunits. [4Fe-4S] cluster serves as cofactor.

The protein resides in the plastid. The protein localises to the chloroplast. It catalyses the reaction chlorophyllide a + oxidized 2[4Fe-4S]-[ferredoxin] + 2 ADP + 2 phosphate = protochlorophyllide a + reduced 2[4Fe-4S]-[ferredoxin] + 2 ATP + 2 H2O. It functions in the pathway porphyrin-containing compound metabolism; chlorophyll biosynthesis (light-independent). Component of the dark-operative protochlorophyllide reductase (DPOR) that uses Mg-ATP and reduced ferredoxin to reduce ring D of protochlorophyllide (Pchlide) to form chlorophyllide a (Chlide). This reaction is light-independent. The NB-protein (ChlN-ChlB) is the catalytic component of the complex. The chain is Light-independent protochlorophyllide reductase subunit B from Chaetosphaeridium globosum (Charophycean green alga).